A 168-amino-acid chain; its full sequence is Small ribosomal subunit protein uS5 (168 aa).

In terms of domain architecture, S5 DRBM spans 11–74 (YSEKVVKIDR…ESAKKHLVKI (64 aa)).

The protein belongs to the universal ribosomal protein uS5 family. Part of the 30S ribosomal subunit. Contacts proteins S4 and S8.

In terms of biological role, with S4 and S12 plays an important role in translational accuracy. Located at the back of the 30S subunit body where it stabilizes the conformation of the head with respect to the body. The protein is Small ribosomal subunit protein uS5 of Leptospira interrogans serogroup Icterohaemorrhagiae serovar copenhageni (strain Fiocruz L1-130).